The sequence spans 127 residues: Aspartate 1-decarboxylase (127 aa).

Ser25 functions as the Schiff-base intermediate with substrate; via pyruvic acid in the catalytic mechanism. Ser25 is subject to Pyruvic acid (Ser). Thr57 provides a ligand contact to substrate. Catalysis depends on Tyr58, which acts as the Proton donor. 73-75 (GAA) provides a ligand contact to substrate.

It belongs to the PanD family. In terms of assembly, heterooctamer of four alpha and four beta subunits. Requires pyruvate as cofactor. Is synthesized initially as an inactive proenzyme, which is activated by self-cleavage at a specific serine bond to produce a beta-subunit with a hydroxyl group at its C-terminus and an alpha-subunit with a pyruvoyl group at its N-terminus.

Its subcellular location is the cytoplasm. The catalysed reaction is L-aspartate + H(+) = beta-alanine + CO2. It functions in the pathway cofactor biosynthesis; (R)-pantothenate biosynthesis; beta-alanine from L-aspartate: step 1/1. Catalyzes the pyruvoyl-dependent decarboxylation of aspartate to produce beta-alanine. The polypeptide is Aspartate 1-decarboxylase (Neisseria meningitidis serogroup A / serotype 4A (strain DSM 15465 / Z2491)).